Reading from the N-terminus, the 524-residue chain is Putative UDP-glucuronosyltransferase ugt-56 (524 aa).

The signal sequence occupies residues 1 to 20 (MLWAFIVWLGALCIYGSAFD). Asparagine 125, asparagine 277, and asparagine 335 each carry an N-linked (GlcNAc...) asparagine glycan. The helical transmembrane segment at 488 to 508 (LIDSSIALVFMLFIFVFVNHF) threads the bilayer.

This sequence belongs to the UDP-glycosyltransferase family.

Its subcellular location is the membrane. It catalyses the reaction glucuronate acceptor + UDP-alpha-D-glucuronate = acceptor beta-D-glucuronoside + UDP + H(+). The protein is Putative UDP-glucuronosyltransferase ugt-56 (ugt-56) of Caenorhabditis elegans.